The primary structure comprises 142 residues: SDDESGDDENGDDKDGDDDDKEEDGEDVSEEDEKADVGDDGDDDDNETGGNSDTNDDVDYGDGNDEAREIGDHSIQDIRDLILDAIHNKDGGEMDADNPLQNLPYGPDKLKELYLRSGGSHFKGQLLNITLGLGFCILFLLL.

Acidic residues-rich tracts occupy residues 1–47 (SDDE…DDNE) and 54–64 (TNDDVDYGDGN). The tract at residues 1–74 (SDDESGDDEN…DEAREIGDHS (74 aa)) is disordered. Topologically, residues 1–123 (SDDESGDDEN…YLRSGGSHFK (123 aa)) are extracellular. Basic and acidic residues predominate over residues 65 to 74 (DEAREIGDHS). Residues 124–141 (GQLLNITLGLGFCILFLL) form a helical membrane-spanning segment. Residue leucine 142 is a topological domain, cytoplasmic.

In terms of tissue distribution, component of the acid-insoluble and acid-soluble organic matrix of the aragonitic skeleton (at protein level).

Its subcellular location is the membrane. The sequence is that of Secreted acidic protein 1B from Acropora millepora (Staghorn coral).